The chain runs to 203 residues: Kunitz trypsin inhibitor 6 (203 aa).

Positions 1–21 (MKTFQLMMISFLFVAITTTSG) are cleaved as a signal peptide. Cys70 and Cys115 form a disulfide bridge. N-linked (GlcNAc...) asparagine glycosylation is found at Asn94, Asn127, Asn136, Asn144, and Asn197.

The protein belongs to the protease inhibitor I3 (leguminous Kunitz-type inhibitor) family.

Exhibits Kunitz trypsin protease inhibitor activity. The polypeptide is Kunitz trypsin inhibitor 6 (Arabidopsis thaliana (Mouse-ear cress)).